We begin with the raw amino-acid sequence, 405 residues long: MARALLIVLDSVGIGGAPDADRYGDAGSDTVGHIAEACAAGRGDRPGLRAGPLRMPNLTALGLGLACEGATGRVPPGLAPDGPVRALWGHAVETAAGKDTPSGHWEIAGVPVREAWGHFPDTQPAFPAELTAALIERAGLPGILGDCHASGTAIIEALGAEHVRTGKPICYTSADSVFQIAAHEEAFGLERLYETCRIAREVCDPYRVGRVIARPFLGSAAEGFRRTSHRKDFSVAPPAGTLLDGLEAAGRAVVSVGKIGDIFAHRATGREIKPAGNAACLDAALDAFAGLPEGGFVFLNLVDFDTEHGHRRDVPGYAAELEAFDARLPEIQAVLKPGDLCVITADHGNDPTWTGTEHTREQVPVLAFGPGLTPRALGRRESFADMGASVAAHLGLPPLGAGQAW.

Positions 10, 305, 310, 346, 347, and 358 each coordinate Mn(2+).

Belongs to the phosphopentomutase family. It depends on Mn(2+) as a cofactor.

Its subcellular location is the cytoplasm. It carries out the reaction 2-deoxy-alpha-D-ribose 1-phosphate = 2-deoxy-D-ribose 5-phosphate. The enzyme catalyses alpha-D-ribose 1-phosphate = D-ribose 5-phosphate. It functions in the pathway carbohydrate degradation; 2-deoxy-D-ribose 1-phosphate degradation; D-glyceraldehyde 3-phosphate and acetaldehyde from 2-deoxy-alpha-D-ribose 1-phosphate: step 1/2. Functionally, isomerase that catalyzes the conversion of deoxy-ribose 1-phosphate (dRib-1-P) and ribose 1-phosphate (Rib-1-P) to deoxy-ribose 5-phosphate (dRib-5-P) and ribose 5-phosphate (Rib-5-P), respectively. This Methylorubrum extorquens (strain CM4 / NCIMB 13688) (Methylobacterium extorquens) protein is Phosphopentomutase.